Here is a 1210-residue protein sequence, read N- to C-terminus: Adenine-specific methyltransferase PglX (1210 aa).

The span at 1181-1194 shows a compositional bias: basic and acidic residues; that stretch reads KQGEHGLTDDDLRG. The tract at residues 1181–1210 is disordered; it reads KQGEHGLTDDDLRGWRPPAATRRRRAAAKQ. Positions 1201–1210 are enriched in basic residues; sequence TRRRRAAAKQ.

It belongs to the methyltransferase superfamily. PglX adenine methyltransferase family.

The catalysed reaction is a 2'-deoxyadenosine in DNA + S-adenosyl-L-methionine = an N(6)-methyl-2'-deoxyadenosine in DNA + S-adenosyl-L-homocysteine + H(+). Functionally, BREX systems (bacteriophage exclusion) provide immunity against bacteriophage. Part of a type 2 BREX system. Probably a DNA methyltransferase, it methylates phage DNA in vitro in an S-adenosyl-L-methionine-dependent manner. Previously called the phage growth limitation (Pgl) system, it confers protection against bacteriophage phiC31. The bacteria allows one cycle of phage infection, but subsequent cycles are impaired, protecting the original bacterial colony. The system undergoes high rates (10(-3) to 10(-4)) of phase reversion, i.e. loss and regain of phiC31 resistance. When the pglW-pglX-pglY-pglZ genes are transformed into a susceptible S.lividans (strain 1326) they confer resistance to infection by phage phiC31 and phiBT1; all 4 genes are necessary. Its function is as follows. Probably a toxic component of a type II toxin-antitoxin (TA) system. The toxic activity is inhibited by its cognate antitoxin PglZ. In terms of biological role, may be a subtypes G and alpha restriction enzyme that recognizes and cleaves an unknown sequence. Methylates an adenine residue in the same sequence. The polypeptide is Adenine-specific methyltransferase PglX (Streptomyces coelicolor (strain ATCC BAA-471 / A3(2) / M145)).